Here is an 80-residue protein sequence, read N- to C-terminus: U-actitoxin-Avd9b (80 aa).

The signal sequence occupies residues 1 to 20; it reads MNLKVLAVFVLCAILVVVTA. A propeptide spanning residues 21-39 is cleaved from the precursor; sequence ERRGTETGGYKKDTLQDLK. The ShKT domain occupies 45 to 80; sequence CFDRYREAACTSDNIRLLCKTSAKYQINCKKSCGLC. 3 cysteine pairs are disulfide-bonded: cysteine 45/cysteine 80, cysteine 54/cysteine 73, and cysteine 63/cysteine 77. Residues 68–69 form a crucial for binding to potassium channels region; that stretch reads KY.

It belongs to the sea anemone type 1 potassium channel toxin family. Type 1b subfamily.

The protein resides in the secreted. Its subcellular location is the nematocyst. In terms of biological role, inhibits voltage-gated potassium channels (Kv1/KCNA). In Anemonia viridis (Snakelocks anemone), this protein is U-actitoxin-Avd9b.